The following is a 301-amino-acid chain: Probable alpha-L-glutamate ligase (301 aa).

The region spanning 104–287 (LQLLSRKGIG…VAGMIFDFIE (184 aa)) is the ATP-grasp domain. ATP contacts are provided by residues K141, 178 to 179 (EF), D187, and 211 to 213 (RSN). D248, E260, and N262 together coordinate Mg(2+). Residues D248, E260, and N262 each contribute to the Mn(2+) site.

It belongs to the RimK family. Mg(2+) serves as cofactor. It depends on Mn(2+) as a cofactor.

This Vibrio parahaemolyticus serotype O3:K6 (strain RIMD 2210633) protein is Probable alpha-L-glutamate ligase.